We begin with the raw amino-acid sequence, 296 residues long: 4-diphosphocytidyl-2-C-methyl-D-erythritol kinase (296 aa).

The active site involves Lys-14. 97 to 107 provides a ligand contact to ATP; that stretch reads PMGAGMGGGSS. Asp-139 is an active-site residue.

The protein belongs to the GHMP kinase family. IspE subfamily.

It catalyses the reaction 4-CDP-2-C-methyl-D-erythritol + ATP = 4-CDP-2-C-methyl-D-erythritol 2-phosphate + ADP + H(+). It functions in the pathway isoprenoid biosynthesis; isopentenyl diphosphate biosynthesis via DXP pathway; isopentenyl diphosphate from 1-deoxy-D-xylulose 5-phosphate: step 3/6. Catalyzes the phosphorylation of the position 2 hydroxy group of 4-diphosphocytidyl-2C-methyl-D-erythritol. The polypeptide is 4-diphosphocytidyl-2-C-methyl-D-erythritol kinase (Polynucleobacter necessarius subsp. necessarius (strain STIR1)).